A 303-amino-acid chain; its full sequence is Beta-lactamase L2 (303 aa).

The segment at residues 1-35 (MLARRRFLQFSGAAVASSLALPLLARAAGKTAASA) is a signal peptide (tat-type signal). Ser-83 acts as the Acyl-ester intermediate in catalysis. Substrate is bound at residue 247–249 (KTG).

Belongs to the class-A beta-lactamase family. Predicted to be exported by the Tat system. The position of the signal peptide cleavage has not been experimentally proven.

It carries out the reaction a beta-lactam + H2O = a substituted beta-amino acid. The protein is Beta-lactamase L2 of Stenotrophomonas maltophilia (Pseudomonas maltophilia).